A 479-amino-acid chain; its full sequence is Ribosomal RNA small subunit methyltransferase F (479 aa).

S-adenosyl-L-methionine is bound by residues 125–131 (AAAPGSK), Glu149, Asp176, and Asp194. Cys247 acts as the Nucleophile in catalysis.

Belongs to the class I-like SAM-binding methyltransferase superfamily. RsmB/NOP family.

It is found in the cytoplasm. The enzyme catalyses cytidine(1407) in 16S rRNA + S-adenosyl-L-methionine = 5-methylcytidine(1407) in 16S rRNA + S-adenosyl-L-homocysteine + H(+). In terms of biological role, specifically methylates the cytosine at position 1407 (m5C1407) of 16S rRNA. The protein is Ribosomal RNA small subunit methyltransferase F of Salmonella agona (strain SL483).